Consider the following 252-residue polypeptide: 14-3-3-like protein GF14 omicron (252 aa).

Phosphoserine is present on residues Ser-65 and Ser-188.

This sequence belongs to the 14-3-3 family.

The protein localises to the nucleus. It localises to the cytoplasm. In terms of biological role, is associated with a DNA binding complex that binds to the G box, a well-characterized cis-acting DNA regulatory element found in plant genes. The polypeptide is 14-3-3-like protein GF14 omicron (GRF11) (Arabidopsis thaliana (Mouse-ear cress)).